We begin with the raw amino-acid sequence, 360 residues long: UDP-3-O-acylglucosamine N-acyltransferase (360 aa).

Catalysis depends on histidine 253, which acts as the Proton acceptor.

The protein belongs to the transferase hexapeptide repeat family. LpxD subfamily. Homotrimer.

It catalyses the reaction a UDP-3-O-[(3R)-3-hydroxyacyl]-alpha-D-glucosamine + a (3R)-hydroxyacyl-[ACP] = a UDP-2-N,3-O-bis[(3R)-3-hydroxyacyl]-alpha-D-glucosamine + holo-[ACP] + H(+). It participates in bacterial outer membrane biogenesis; LPS lipid A biosynthesis. Catalyzes the N-acylation of UDP-3-O-acylglucosamine using 3-hydroxyacyl-ACP as the acyl donor. Is involved in the biosynthesis of lipid A, a phosphorylated glycolipid that anchors the lipopolysaccharide to the outer membrane of the cell. The polypeptide is UDP-3-O-acylglucosamine N-acyltransferase (Burkholderia multivorans (strain ATCC 17616 / 249)).